Consider the following 520-residue polypeptide: Leucine carboxyl methyltransferase 1 (520 aa).

Disordered regions lie at residues 1–116 (MQRD…DDAV) and 142–174 (TQEFSSTLPSNGGHPTGRSGFPQPHHPGSSIRR). The span at 79 to 89 (PSLRLSLGLPR) shows a compositional bias: low complexity. Composition is skewed to polar residues over residues 95–110 (HSGQTSDATNITSTAR) and 142–151 (TQEFSSTLPS). Residues arginine 185, glycine 210, aspartate 237, 305 to 306 (DV), and glutamate 343 contribute to the S-adenosyl-L-methionine site.

The protein belongs to the methyltransferase superfamily. LCMT family.

It carries out the reaction [phosphatase 2A protein]-C-terminal L-leucine + S-adenosyl-L-methionine = [phosphatase 2A protein]-C-terminal L-leucine methyl ester + S-adenosyl-L-homocysteine. In terms of biological role, methylates the carboxyl group of the C-terminal leucine residue of protein phosphatase 2A catalytic subunits to form alpha-leucine ester residues. The polypeptide is Leucine carboxyl methyltransferase 1 (PPM1) (Mycosarcoma maydis (Corn smut fungus)).